A 487-amino-acid chain; its full sequence is Sodium-coupled neutral amino acid symporter 1 (487 aa).

Residues 1-74 are Cytoplasmic-facing; the sequence is MMHFKSGLEL…EYIPGTTSLG (74 aa). At Ser6 the chain carries Phosphoserine. Thr11 is subject to Phosphothreonine. 4 positions are modified to phosphoserine: Ser25, Ser28, Ser49, and Ser52. Thr54 bears the Phosphothreonine mark. Ser56 bears the Phosphoserine mark. A helical transmembrane segment spans residues 75–97; the sequence is MSVFNLSNAIMGSGILGLAFALA. The Extracellular portion of the chain corresponds to 98–112; it reads NTGILLFLVLLTSVT. A helical transmembrane segment spans residues 113–133; that stretch reads LLSIYSINLLLICSKETGCMV. The Cytoplasmic portion of the chain corresponds to 134-147; the sequence is YEKLGEQVFGTTGK. The helical transmembrane segment at 148–168 threads the bilayer; sequence FVIFGATSLQNTGAMLSYLFI. At 169-188 the chain is on the extracellular side; that stretch reads VKNELPSAIKFLMGKEETFS. The chain crosses the membrane as a helical span at residues 189–211; it reads AWYVDGRVLVVIVTFGIILPLCL. Residues 212 to 216 lie on the Cytoplasmic side of the membrane; that stretch reads LKNLG. A helical membrane pass occupies residues 217 to 237; sequence YLGYTSGFSLSCMVFFLIVVI. The Extracellular segment spans residues 238–275; sequence YKKFQIPCIVPELNSTISANSTNADTCTPKYVTFNSKT. A disulfide bond links Cys245 and Cys264. N-linked (GlcNAc...) asparagine glycosylation is found at Asn251 and Asn257. A helical membrane pass occupies residues 276–296; it reads VYALPTIAFAFVCHPSVLPIY. The Cytoplasmic segment spans residues 297 to 312; sequence SELKDRSQKKMQMVSN. Residues 313–333 traverse the membrane as a helical segment; the sequence is ISFFAMFVMYFLTAIFGYLTF. The Extracellular segment spans residues 334–350; it reads YDNVQSDLLHKYQSKDD. A helical membrane pass occupies residues 351–371; the sequence is ILILTVRLAVIVAVILTVPVL. Residues 372–393 lie on the Cytoplasmic side of the membrane; sequence FFTVRSSLFELAKKTKFNLCRH. The helical transmembrane segment at 394-414 threads the bilayer; that stretch reads TVVTCILLVVINLLVIFIPSM. Residues 415–416 are Extracellular-facing; the sequence is KD. A helical transmembrane segment spans residues 417-437; that stretch reads IFGVVGVTSANMLIFILPSSL. The Cytoplasmic portion of the chain corresponds to 438–452; the sequence is YLKITDQDGDKGTQR. The chain crosses the membrane as a helical span at residues 453–473; it reads IWAALFLGLGVLFSLVSIPLV. At 474-487 the chain is on the extracellular side; sequence IYDWACSSSSDEGH.

Belongs to the amino acid/polyamine transporter 2 family. In terms of processing, N-glycosylation plays an important role in the L-glutamine transport. In terms of tissue distribution, expressed in the cerebral cortex by pyramidal and GABAergic neurons, astrocytes and other non-neuronal cells (at protein level). Expressed in placenta, heart, lung, skeletal muscle, spleen, stomach and testis. Highly expressed in cytotrophoblast cells from term placenta.

The protein resides in the cell membrane. The catalysed reaction is L-glutamine(in) + Na(+)(in) = L-glutamine(out) + Na(+)(out). It catalyses the reaction L-alanine(in) + Na(+)(in) = L-alanine(out) + Na(+)(out). It carries out the reaction L-asparagine(in) + Na(+)(in) = L-asparagine(out) + Na(+)(out). The enzyme catalyses L-histidine(in) + Na(+)(in) = L-histidine(out) + Na(+)(out). The catalysed reaction is L-serine(in) + Na(+)(in) = L-serine(out) + Na(+)(out). It catalyses the reaction L-cysteine(in) + Na(+)(in) = L-cysteine(out) + Na(+)(out). It carries out the reaction L-methionine(in) + Na(+)(in) = L-methionine(out) + Na(+)(out). The enzyme catalyses glycine(in) + Na(+)(in) = glycine(out) + Na(+)(out). The catalysed reaction is L-threonine(in) + Na(+)(in) = L-threonine(out) + Na(+)(out). It catalyses the reaction L-proline(in) + Na(+)(in) = L-proline(out) + Na(+)(out). Inhibited by alpha-(methylamino)isobutyric acid (MeAIB). Inhibited by lithium, potassium, choline ions, N-methylglucamine. The pH dependence has an allosteric effect on the transport. In terms of biological role, symporter that cotransports short-chain neutral amino acids and sodium ions from the extraccellular to the intracellular side of the cell membrane. The transport is elctrogenic, pH dependent and driven by the Na(+) electrochemical gradient. Participates in the astroglia-derived glutamine transport into GABAergic interneurons for neurotransmitter GABA de novo synthesis. May also contributes to amino acid transport in placental trophoblasts. Also regulates synaptic plasticity. The chain is Sodium-coupled neutral amino acid symporter 1 (SLC38A1) from Homo sapiens (Human).